A 449-amino-acid chain; its full sequence is Ribosomal protein uS12 methylthiotransferase RimO (449 aa).

The MTTase N-terminal domain occupies 16-126 (PKISFVSLGC…VMEAVHAAIA (111 aa)). Residues cysteine 25, cysteine 61, cysteine 90, cysteine 157, cysteine 161, and cysteine 164 each coordinate [4Fe-4S] cluster. Residues 143-381 (LTPRHYAYLK…MEHQQKISAR (239 aa)) form the Radical SAM core domain. Positions 384–449 (REKIGKHVSV…DAYDLHGKAV (66 aa)) constitute a TRAM domain.

It belongs to the methylthiotransferase family. RimO subfamily. It depends on [4Fe-4S] cluster as a cofactor.

Its subcellular location is the cytoplasm. The catalysed reaction is L-aspartate(89)-[ribosomal protein uS12]-hydrogen + (sulfur carrier)-SH + AH2 + 2 S-adenosyl-L-methionine = 3-methylsulfanyl-L-aspartate(89)-[ribosomal protein uS12]-hydrogen + (sulfur carrier)-H + 5'-deoxyadenosine + L-methionine + A + S-adenosyl-L-homocysteine + 2 H(+). Its function is as follows. Catalyzes the methylthiolation of an aspartic acid residue of ribosomal protein uS12. This Beijerinckia indica subsp. indica (strain ATCC 9039 / DSM 1715 / NCIMB 8712) protein is Ribosomal protein uS12 methylthiotransferase RimO.